Here is a 634-residue protein sequence, read N- to C-terminus: Chaperone protein HtpG (634 aa).

The a; substrate-binding stretch occupies residues 1-344; the sequence is MNETVANNKE…SNDLPLNVSR (344 aa). Positions 345-561 are b; the sequence is EILQDNKVTQ…DFEMGTQMAK (217 aa). The tract at residues 562–634 is c; it reads LLAAAGQAVP…TAINSLLTKG (73 aa).

This sequence belongs to the heat shock protein 90 family. As to quaternary structure, homodimer.

The protein resides in the cytoplasm. Functionally, molecular chaperone. Has ATPase activity. This is Chaperone protein HtpG from Vibrio vulnificus (strain YJ016).